Here is a 427-residue protein sequence, read N- to C-terminus: Trigger factor (427 aa).

Residues 163-248 (GDTVVIDFVG…IHEVKEKEVP (86 aa)) enclose the PPIase FKBP-type domain.

The protein belongs to the FKBP-type PPIase family. Tig subfamily.

The protein localises to the cytoplasm. It catalyses the reaction [protein]-peptidylproline (omega=180) = [protein]-peptidylproline (omega=0). Involved in protein export. Acts as a chaperone by maintaining the newly synthesized protein in an open conformation. Functions as a peptidyl-prolyl cis-trans isomerase. In Streptococcus sanguinis (strain SK36), this protein is Trigger factor.